Consider the following 740-residue polypeptide: Ribosomal protein S6 kinase alpha-3 (740 aa).

The disordered stretch occupies residues 1-38 (MPLAQLADPWQKMAVESPSDSAENGQQIMDEPMGEEEI). Polar residues predominate over residues 18–27 (PSDSAENGQQ). Residues 68-327 (FELLKVLGQG…VEEIKRHSFF (260 aa)) form the Protein kinase 1 domain. ATP-binding positions include 74–82 (LGQGSFGKV) and Lys100. Asp193 serves as the catalytic Proton acceptor. The residue at position 227 (Ser227) is a Phosphoserine; by PDPK1. The AGC-kinase C-terminal domain occupies 328-397 (STIDWNKLYR…VAITSDDESQ (70 aa)). A Phosphothreonine modification is found at Thr365. Phosphoserine occurs at positions 369 and 375. At Ser386 the chain carries Phosphoserine; by autocatalysis and MAPKAPK2. At Ser415 the chain carries Phosphoserine. Positions 422–679 (YEVKEDIGVG…AALVLRHPWI (258 aa)) constitute a Protein kinase 2 domain. Residues 428–436 (IGVGSYSVC) and Lys451 contribute to the ATP site. The residue at position 529 (Tyr529) is a Phosphotyrosine; by FGFR3. Asp539 functions as the Proton acceptor in the catalytic mechanism. Phosphoserine is present on residues Ser556 and Ser715.

It belongs to the protein kinase superfamily. AGC Ser/Thr protein kinase family. S6 kinase subfamily. Forms a complex with either MAPK1/ERK2 or MAPK3/ERK1 in quiescent cells. Transiently dissociates following mitogenic stimulation. Interacts with NFATC4, ETV1/ER81 and FGFR1. Mg(2+) serves as cofactor. Post-translationally, activated by phosphorylation at Ser-227 by PDPK1. Autophosphorylated on Ser-386, as part of the activation process. May be phosphorylated at Thr-365 and Ser-369 by MAPK1/ERK2 and MAPK3/ERK1. Can also be activated via phosphorylation at Ser-386 by MAPKAPK2. In terms of processing, N-terminal myristoylation results in an activated kinase in the absence of added growth factors. As to expression, expressed in many tissues, highest levels in skeletal muscle.

Its subcellular location is the nucleus. It is found in the cytoplasm. It catalyses the reaction L-seryl-[protein] + ATP = O-phospho-L-seryl-[protein] + ADP + H(+). The enzyme catalyses L-threonyl-[protein] + ATP = O-phospho-L-threonyl-[protein] + ADP + H(+). Its activity is regulated as follows. Upon extracellular signal or mitogen stimulation, phosphorylated at Thr-577 in the C-terminal kinase domain (CTKD) by MAPK1/ERK2 and MAPK3/ERK1. The activated CTKD then autophosphorylates Ser-386, allowing binding of PDPK1, which in turn phosphorylates Ser-227 in the N-terminal kinase domain (NTDK) leading to the full activation of the protein and subsequent phosphorylation of the substrates by the NTKD. Functionally, serine/threonine-protein kinase that acts downstream of ERK (MAPK1/ERK2 and MAPK3/ERK1) signaling and mediates mitogenic and stress-induced activation of the transcription factors CREB1, ETV1/ER81 and NR4A1/NUR77, regulates translation through RPS6 and EIF4B phosphorylation, and mediates cellular proliferation, survival, and differentiation by modulating mTOR signaling and repressing pro-apoptotic function of BAD and DAPK1. In fibroblast, is required for EGF-stimulated phosphorylation of CREB1 and histone H3 at 'Ser-10', which results in the subsequent transcriptional activation of several immediate-early genes. In response to mitogenic stimulation (EGF and PMA), phosphorylates and activates NR4A1/NUR77 and ETV1/ER81 transcription factors and the cofactor CREBBP. Upon insulin-derived signal, acts indirectly on the transcription regulation of several genes by phosphorylating GSK3B at 'Ser-9' and inhibiting its activity. Phosphorylates RPS6 in response to serum or EGF via an mTOR-independent mechanism and promotes translation initiation by facilitating assembly of the preinitiation complex. In response to insulin, phosphorylates EIF4B, enhancing EIF4B affinity for the EIF3 complex and stimulating cap-dependent translation. Is involved in the mTOR nutrient-sensing pathway by directly phosphorylating TSC2 at 'Ser-1798', which potently inhibits TSC2 ability to suppress mTOR signaling, and mediates phosphorylation of RPTOR, which regulates mTORC1 activity and may promote rapamycin-sensitive signaling independently of the PI3K/AKT pathway. Mediates cell survival by phosphorylating the pro-apoptotic proteins BAD and DAPK1 and suppressing their pro-apoptotic function. Promotes the survival of hepatic stellate cells by phosphorylating CEBPB in response to the hepatotoxin carbon tetrachloride (CCl4). Is involved in cell cycle regulation by phosphorylating the CDK inhibitor CDKN1B, which promotes CDKN1B association with 14-3-3 proteins and prevents its translocation to the nucleus and inhibition of G1 progression. In LPS-stimulated dendritic cells, is involved in TLR4-induced macropinocytosis, and in myeloma cells, acts as effector of FGFR3-mediated transformation signaling, after direct phosphorylation at Tyr-529 by FGFR3. Negatively regulates EGF-induced MAPK1/3 phosphorylation via phosphorylation of SOS1. Phosphorylates SOS1 at 'Ser-1134' and 'Ser-1161' that create YWHAB and YWHAE binding sites and which contribute to the negative regulation of MAPK1/3 phosphorylation. Phosphorylates EPHA2 at 'Ser-897', the RPS6KA-EPHA2 signaling pathway controls cell migration. Acts as a regulator of osteoblast differentiation by mediating phosphorylation of ATF4, thereby promoting ATF4 transactivation activity. The polypeptide is Ribosomal protein S6 kinase alpha-3 (RPS6KA3) (Homo sapiens (Human)).